We begin with the raw amino-acid sequence, 524 residues long: Bifunctional purine biosynthesis protein PurH (524 aa).

One can recognise an MGS-like domain in the interval 1–144; that stretch reads MTRRALVSVS…KNSAHVGVVV (144 aa).

Belongs to the PurH family.

It catalyses the reaction (6R)-10-formyltetrahydrofolate + 5-amino-1-(5-phospho-beta-D-ribosyl)imidazole-4-carboxamide = 5-formamido-1-(5-phospho-D-ribosyl)imidazole-4-carboxamide + (6S)-5,6,7,8-tetrahydrofolate. The catalysed reaction is IMP + H2O = 5-formamido-1-(5-phospho-D-ribosyl)imidazole-4-carboxamide. It participates in purine metabolism; IMP biosynthesis via de novo pathway; 5-formamido-1-(5-phospho-D-ribosyl)imidazole-4-carboxamide from 5-amino-1-(5-phospho-D-ribosyl)imidazole-4-carboxamide (10-formyl THF route): step 1/1. Its pathway is purine metabolism; IMP biosynthesis via de novo pathway; IMP from 5-formamido-1-(5-phospho-D-ribosyl)imidazole-4-carboxamide: step 1/1. The sequence is that of Bifunctional purine biosynthesis protein PurH from Anaeromyxobacter dehalogenans (strain 2CP-C).